The sequence spans 159 residues: SsrA-binding protein (159 aa).

It belongs to the SmpB family.

The protein resides in the cytoplasm. Required for rescue of stalled ribosomes mediated by trans-translation. Binds to transfer-messenger RNA (tmRNA), required for stable association of tmRNA with ribosomes. tmRNA and SmpB together mimic tRNA shape, replacing the anticodon stem-loop with SmpB. tmRNA is encoded by the ssrA gene; the 2 termini fold to resemble tRNA(Ala) and it encodes a 'tag peptide', a short internal open reading frame. During trans-translation Ala-aminoacylated tmRNA acts like a tRNA, entering the A-site of stalled ribosomes, displacing the stalled mRNA. The ribosome then switches to translate the ORF on the tmRNA; the nascent peptide is terminated with the 'tag peptide' encoded by the tmRNA and targeted for degradation. The ribosome is freed to recommence translation, which seems to be the essential function of trans-translation. This is SsrA-binding protein from Actinobacillus pleuropneumoniae serotype 5b (strain L20).